We begin with the raw amino-acid sequence, 87 residues long: Small ribosomal subunit protein bS20 (87 aa).

Positions 1 to 22 (MANTSQARKRARQAGVRRVRNA) are disordered. Residues 7-20 (ARKRARQAGVRRVR) are compositionally biased toward basic residues.

Belongs to the bacterial ribosomal protein bS20 family.

Binds directly to 16S ribosomal RNA. The protein is Small ribosomal subunit protein bS20 of Nitrosococcus oceani (strain ATCC 19707 / BCRC 17464 / JCM 30415 / NCIMB 11848 / C-107).